The primary structure comprises 667 residues: Bicarbonate transport ATP-binding protein CmpC (667 aa).

An ABC transporter domain is found at V5–E239. Position 42 to 49 (G42 to S49) interacts with ATP. The cmpA-like stretch occupies residues L281–A667.

Belongs to the ABC transporter superfamily. Nitrate/nitrite/cyanate uptake transporter (NitT) (TC 3.A.1.16) family. The complex is composed of two ATP-binding proteins (CmpC and CmpD), a transmembrane protein (CmpB) and a solute-binding protein (CmpA).

Its subcellular location is the cell inner membrane. Functionally, part of the ABC transporter complex CmpABCD involved in bicarbonate transport. Responsible for energy coupling to the transport system. The sequence is that of Bicarbonate transport ATP-binding protein CmpC (cmpC) from Synechocystis sp. (strain ATCC 27184 / PCC 6803 / Kazusa).